A 369-amino-acid chain; its full sequence is Choline-phosphate cytidylyltransferase B (369 aa).

Positions Met-1–Met-27 are disordered. Ile-84, Phe-85, His-92, and Lys-122 together coordinate CTP. Phosphocholine is bound by residues Lys-122 and Trp-151. Residues His-168, Asp-169, Tyr-173, Gln-195, Arg-196, Thr-197, and Ile-200 each contribute to the CTP site. The tract at residues Arg-309–Lys-369 is disordered. Phosphoserine occurs at positions 315, 319, 322, 323, 329, 331, and 335. Positions Ser-319–Ser-339 are enriched in low complexity. Thr-345 is subject to Phosphothreonine. Phosphoserine occurs at positions 346, 349, 350, 355, 360, and 362. Over residues Pro-351–Ser-362 the composition is skewed to low complexity.

This sequence belongs to the cytidylyltransferase family. As to quaternary structure, homodimer. In terms of processing, phosphorylated. Extensively phosphorylated. In terms of tissue distribution, highly expressed in testis, placenta, brain, ovary, liver and fetal lung. Expressed in brain, liver and fetal lung.

Its subcellular location is the cytoplasm. It localises to the endoplasmic reticulum. The catalysed reaction is phosphocholine + CTP + H(+) = CDP-choline + diphosphate. It participates in phospholipid metabolism; phosphatidylcholine biosynthesis; phosphatidylcholine from phosphocholine: step 1/2. Catalyzes the key rate-limiting step in the CDP-choline pathway for phosphatidylcholine biosynthesis. The sequence is that of Choline-phosphate cytidylyltransferase B (PCYT1B) from Homo sapiens (Human).